Here is a 347-residue protein sequence, read N- to C-terminus: UDP-glucose 4-epimerase (347 aa).

NAD(+) contacts are provided by residues 11 to 13 (GYI), 32 to 36 (DNFHN), 65 to 66 (DI), phenylalanine 87, and lysine 91. 131–133 (SAT) is a binding site for substrate. Tyrosine 156 (proton acceptor) is an active-site residue. 2 residues coordinate NAD(+): lysine 160 and tyrosine 184. Substrate contacts are provided by residues 184–186 (YFN), 205–207 (NNL), 223–225 (NVF), arginine 238, and 299–302 (REGD).

It belongs to the NAD(P)-dependent epimerase/dehydratase family. As to quaternary structure, homodimer. Requires NAD(+) as cofactor.

It catalyses the reaction UDP-alpha-D-glucose = UDP-alpha-D-galactose. It carries out the reaction UDP-N-acetyl-alpha-D-glucosamine = UDP-N-acetyl-alpha-D-galactosamine. The protein operates within carbohydrate metabolism; galactose metabolism. Catalyzes two distinct but analogous reactions: the reversible epimerization of UDP-glucose to UDP-galactose and the reversible epimerization of UDP-N-acetylglucosamine to UDP-N-acetylgalactosamine. The reaction with UDP-Gal plays a critical role in the Leloir pathway of galactose catabolism in which galactose is converted to the glycolytic intermediate glucose 6-phosphate. It contributes to the catabolism of dietary galactose and enables the endogenous biosynthesis of both UDP-Gal and UDP-GalNAc when exogenous sources are limited. Both UDP-sugar interconversions are important in the synthesis of glycoproteins and glycolipids. This chain is UDP-glucose 4-epimerase (Gale), found in Mus musculus (Mouse).